The sequence spans 200 residues: Glutathione S-transferase domain-containing protein DDB_G0273153/DDB_G0273923 (200 aa).

The region spanning 1-71 is the GST N-terminal domain; the sequence is MISSIYIFKI…YISNNHNFSG (71 aa). The region spanning 73-195 is the GST C-terminal domain; that stretch reads SLQESARVDD…INSNNINSQS (123 aa).

It belongs to the GST superfamily.

The chain is Glutathione S-transferase domain-containing protein DDB_G0273153/DDB_G0273923 from Dictyostelium discoideum (Social amoeba).